We begin with the raw amino-acid sequence, 469 residues long: Zinc transporter SLC39A7 (469 aa).

The chain crosses the membrane as a helical span at residues 10-30 (WVAVGLLTWATLGLLVAGLGG). 2 stretches are compositionally biased toward basic and acidic residues: residues 42–56 (FHGH…DFHH) and 66–114 (HTHE…EHSH). A disordered region spans residues 42-121 (FHGHSHRHSH…HSHGGYGESG (80 aa)). At His-66 the chain carries Pros-methylhistidine. Transmembrane regions (helical) follow at residues 138–158 (ALGA…LIPV), 169–189 (LQIL…LHLI), and 214–234 (GPIL…LVVE). A compositionally biased stretch (basic residues) spans 242–263 (GGHGHSHGHGHAHSHTRGSHGH). The tract at residues 242 to 310 (GGHGHSHGHG…VRPQNAEEEK (69 aa)) is disordered. Positions 264–285 (GRQERSTKEKQSSEEEEKETRG) are enriched in basic and acidic residues. Phosphoserine; by CK2 occurs at positions 275 and 276. 2 consecutive transmembrane segments (helical) span residues 381–401 (MRLQ…ALLT) and 417–436 (GWVL…VSVL).

It belongs to the ZIP transporter (TC 2.A.5) family. KE4/Catsup subfamily. In terms of assembly, homodimer. Post-translationally, rapidly phosphorylated by CK2 following Zn(2+) treatment. This phosphorylation is required for efficient cytosolic Zn(2+) release. Methylation at some His residue by METTL9 leads to reduced zinc-binding. As to expression, widely expressed.

It is found in the endoplasmic reticulum membrane. The protein resides in the golgi apparatus. Its subcellular location is the cis-Golgi network membrane. It catalyses the reaction Zn(2+)(in) = Zn(2+)(out). Its activity is regulated as follows. Phosphorylation activates zinc transport activity. Functionally, transports Zn(2+) from the endoplasmic reticulum (ER)/Golgi apparatus to the cytosol, playing an essential role in the regulation of cytosolic zinc levels. Acts as a gatekeeper of zinc release from intracellular stores, requiring post-translational activation by phosphorylation, resulting in activation of multiple downstream pathways leading to cell growth and proliferation. Has an essential role in B cell development and is required for proper B cell receptor signaling. Plays an important role in maintaining intestinal epithelial homeostasis and skin dermis development by regulating ER function. Controls cell signaling pathways involved in glucose metabolism in skeletal muscle. Has a protective role against ER stress in different biological contexts. Mediates Zn(2+)-induced ferroptosis. In Homo sapiens (Human), this protein is Zinc transporter SLC39A7 (SLC39A7).